A 463-amino-acid chain; its full sequence is Probable ECA polymerase (463 aa).

The next 11 membrane-spanning stretches (helical) occupy residues 6-26, 39-59, 65-85, 112-132, 154-174, 180-200, 201-221, 222-242, 340-360, 377-397, and 408-428; these read FGGLFVVYLISVIFILSLTWM, FSLLYLLTFYFGFPFTCVLVF, VVPVQYLLQAMLSATAFYAVY, ANLTWLLLALIAVATVGIFFL, GVALKRFFYFFIPAMLVVYFL, AWLLFLIGTVAFGMLTYVIVG, GTRANLIIAFALFLFIGIVRG, WITLWMLVAAGIFGIVGMFWL, LVVMGGVLFIPLGAIAVGLVI, YKAAILQAFCFGAVFNIIVLT, and VVFFCLIFGLCLLVAKLLYWL.

This sequence belongs to the WzyE family. In terms of assembly, probably part of a complex composed of WzxE, WzyE and WzzE.

The protein resides in the cell inner membrane. The protein operates within bacterial outer membrane biogenesis; enterobacterial common antigen biosynthesis. Probably involved in the polymerization of enterobacterial common antigen (ECA) trisaccharide repeat units. This Pectobacterium atrosepticum (strain SCRI 1043 / ATCC BAA-672) (Erwinia carotovora subsp. atroseptica) protein is Probable ECA polymerase.